A 278-amino-acid chain; its full sequence is Tryptophan synthase alpha chain (278 aa).

Residues Glu50 and Asp61 each act as proton acceptor in the active site.

Belongs to the TrpA family. In terms of assembly, tetramer of two alpha and two beta chains.

It carries out the reaction (1S,2R)-1-C-(indol-3-yl)glycerol 3-phosphate + L-serine = D-glyceraldehyde 3-phosphate + L-tryptophan + H2O. The protein operates within amino-acid biosynthesis; L-tryptophan biosynthesis; L-tryptophan from chorismate: step 5/5. The alpha subunit is responsible for the aldol cleavage of indoleglycerol phosphate to indole and glyceraldehyde 3-phosphate. In Rhodopseudomonas palustris (strain BisA53), this protein is Tryptophan synthase alpha chain.